The primary structure comprises 620 residues: Glutathione-regulated potassium-efflux system protein KefC (620 aa).

The next 12 membrane-spanning stretches (helical) occupy residues 4 to 24 (HTLL…PIAV), 26 to 46 (LGLG…PWGL), 54 to 74 (SILH…GLEL), 90 to 110 (GALQ…FLGL), 114 to 134 (VAEL…MQAM), 149 to 169 (FAVL…IPLL), 178 to 198 (LGAF…VVVL), 218 to 238 (VFSA…EEVG), 270 to 290 (GLLL…GTLV), 294 to 314 (LRIL…LWLV), 327 to 347 (WFAV…GAAQ), and 359 to 379 (ALTL…VLLT). Residues 399-518 (QPRVIVAGFG…AGVAMPERET (120 aa)) form the RCK N-terminal domain. Residues 599–620 (QGTAEGKHSGEVADEPEVKPSI) are disordered.

The protein belongs to the monovalent cation:proton antiporter 2 (CPA2) transporter (TC 2.A.37) family. KefC subfamily. As to quaternary structure, homodimer. Interacts with the regulatory subunit KefF.

The protein resides in the cell inner membrane. Pore-forming subunit of a potassium efflux system that confers protection against electrophiles. Catalyzes K(+)/H(+) antiport. The polypeptide is Glutathione-regulated potassium-efflux system protein KefC (Salmonella paratyphi B (strain ATCC BAA-1250 / SPB7)).